The primary structure comprises 174 residues: Late lactation protein B (174 aa).

The signal sequence occupies residues 1–18 (MKVLFLTIALSLFSILQA). C77 and C169 are oxidised to a cystine.

This sequence belongs to the calycin superfamily. Lipocalin family. In terms of tissue distribution, mammary gland specific. Secreted in milk.

Its subcellular location is the secreted. Its function is as follows. Probably serves a role in the transport of a small ligand released during the hydrolysis of milk fat. This chain is Late lactation protein B (LLPB), found in Notamacropus eugenii (Tammar wallaby).